A 332-amino-acid chain; its full sequence is L-lactate dehydrogenase A chain (332 aa).

Ala2 carries the N-acetylalanine modification. Lys5 carries the post-translational modification N6-acetyllysine; alternate. Lys5 is modified (N6-succinyllysine; alternate). Residue Lys14 is modified to N6-acetyllysine. 29-57 (GAVGMACAISILMKDLADELALVDVIEDK) is a binding site for NAD(+). Lys57 is modified (N6-acetyllysine; alternate). Lys57 is covalently cross-linked (Glycyl lysine isopeptide (Lys-Gly) (interchain with G-Cter in SUMO2); alternate). Residue Lys81 is modified to N6-acetyllysine. Residue Arg99 coordinates NAD(+). Arg106 contributes to the substrate binding site. An N6-acetyllysine; alternate modification is found at Lys118. Lys118 is subject to N6-succinyllysine; alternate. Lys126 carries the post-translational modification N6-acetyllysine. Residue Asn138 participates in NAD(+) binding. Substrate is bound by residues Asn138 and Arg169. His193 serves as the catalytic Proton acceptor. A Phosphoserine modification is found at Ser213. N6-acetyllysine is present on residues Lys224 and Lys232. Tyr239 is subject to Phosphotyrosine. Lys243 is modified (N6-acetyllysine). Residue Thr248 coordinates substrate. Thr309 is subject to Phosphothreonine. Lys318 is subject to N6-acetyllysine; alternate. Lys318 bears the N6-succinyllysine; alternate mark. Thr322 carries the post-translational modification Phosphothreonine.

It belongs to the LDH/MDH superfamily. LDH family. As to quaternary structure, homotetramer. Interacts with PTEN upstream reading frame protein MP31. Post-translationally, ISGylated.

It localises to the cytoplasm. The catalysed reaction is (S)-lactate + NAD(+) = pyruvate + NADH + H(+). It functions in the pathway fermentation; pyruvate fermentation to lactate; (S)-lactate from pyruvate: step 1/1. Functionally, interconverts simultaneously and stereospecifically pyruvate and lactate with concomitant interconversion of NADH and NAD(+). This Rattus norvegicus (Rat) protein is L-lactate dehydrogenase A chain (Ldha).